The sequence spans 406 residues: Sprouty-related, EVH1 domain-containing protein 1 (406 aa).

The 118-residue stretch at 3–120 (GEQEPDDSYA…RGIRRAIEDL (118 aa)) folds into the WH1 domain. A disordered region spans residues 124–154 (LPASCHGESETSEDGPQVNKEDHYSTHNNDH). Residues 142-154 (NKEDHYSTHNNDH) are compositionally biased toward basic and acidic residues. The KBD domain maps to 195–247 (PIRHVSFQDEDEIVRINPRDMIIRRYADYRHPDIFRNDVDREEPEDVTFFTKT). An SPR domain is found at 296 to 404 (SCVYCQERFN…CGCCGGKHKA (109 aa)).

Post-translationally, palmitoylated by ZDHHC17/HIP14. Ubiquitinated. In terms of processing, phosphorylated on tyrosine.

It localises to the cell membrane. Its function is as follows. Tyrosine kinase substrate that inhibits growth-factor-mediated activation of MAP kinase. The polypeptide is Sprouty-related, EVH1 domain-containing protein 1 (spred1) (Xenopus tropicalis (Western clawed frog)).